The chain runs to 369 residues: Developmentally-regulated G-protein 3 (369 aa).

In terms of domain architecture, OBG-type G spans 66–291; it reads SRVGLVGFPS…LLDKIWEYLD (226 aa). GTP-binding positions include 72-79, 118-122, and 249-252; these read GFPSVGKS, DLPGI, and NKID. The 77-residue stretch at 291 to 367 folds into the TGS domain; it reads DLTRIYTKPK…EDEDVVQIVK (77 aa).

This sequence belongs to the TRAFAC class OBG-HflX-like GTPase superfamily. OBG GTPase family.

In terms of biological role, binds GDP and GTP, and has low GTPase activity in vitro. The chain is Developmentally-regulated G-protein 3 (DRG3) from Arabidopsis thaliana (Mouse-ear cress).